The following is a 725-amino-acid chain: Catalase B (725 aa).

The N-terminal stretch at 1–15 (MRALSLASLIGIASA) is a signal peptide. The propeptide occupies 16–27 (ACPYMTGELERR). N50 is a glycosylation site (N-linked (GlcNAc...) asparagine). H101 is an active-site residue. N119 carries an N-linked (GlcNAc...) asparagine glycan. N174 is an active-site residue. Y388 serves as a coordination point for heme. 3 N-linked (GlcNAc...) asparagine glycosylation sites follow: N447, N550, and N645.

It belongs to the catalase family. As to quaternary structure, homotetramer. Heme serves as cofactor.

The protein localises to the secreted. The catalysed reaction is 2 H2O2 = O2 + 2 H2O. In terms of biological role, occurs in almost all aerobically respiring organisms and serves to protect cells from the toxic effects of hydrogen peroxide through its degradation into water and oxygen. The polypeptide is Catalase B (catB) (Aspergillus oryzae (strain ATCC 42149 / RIB 40) (Yellow koji mold)).